The primary structure comprises 208 residues: Protein GrpE (208 aa).

Residues methionine 1–glutamine 27 show a composition bias toward basic and acidic residues. The segment at methionine 1–alanine 65 is disordered. The segment covering methionine 45–alanine 64 has biased composition (acidic residues).

It belongs to the GrpE family. As to quaternary structure, homodimer.

It is found in the cytoplasm. Participates actively in the response to hyperosmotic and heat shock by preventing the aggregation of stress-denatured proteins, in association with DnaK and GrpE. It is the nucleotide exchange factor for DnaK and may function as a thermosensor. Unfolded proteins bind initially to DnaJ; upon interaction with the DnaJ-bound protein, DnaK hydrolyzes its bound ATP, resulting in the formation of a stable complex. GrpE releases ADP from DnaK; ATP binding to DnaK triggers the release of the substrate protein, thus completing the reaction cycle. Several rounds of ATP-dependent interactions between DnaJ, DnaK and GrpE are required for fully efficient folding. This is Protein GrpE from Desulfatibacillum aliphaticivorans.